The following is a 338-amino-acid chain: Aspartate-semialdehyde dehydrogenase (338 aa).

NADP(+)-binding positions include 13–16 (SGAV) and 41–42 (RS). A phosphate-binding site is contributed by arginine 101. The Acyl-thioester intermediate role is filled by cysteine 132. Residue glutamine 159 coordinates substrate. 162-163 (SG) is an NADP(+) binding site. A phosphate-binding site is contributed by lysine 216. Substrate is bound at residue arginine 238. Histidine 245 acts as the Proton acceptor in catalysis. Asparagine 317 lines the NADP(+) pocket.

This sequence belongs to the aspartate-semialdehyde dehydrogenase family. Homodimer.

It catalyses the reaction L-aspartate 4-semialdehyde + phosphate + NADP(+) = 4-phospho-L-aspartate + NADPH + H(+). Its pathway is amino-acid biosynthesis; L-lysine biosynthesis via DAP pathway; (S)-tetrahydrodipicolinate from L-aspartate: step 2/4. It participates in amino-acid biosynthesis; L-methionine biosynthesis via de novo pathway; L-homoserine from L-aspartate: step 2/3. It functions in the pathway amino-acid biosynthesis; L-threonine biosynthesis; L-threonine from L-aspartate: step 2/5. Its function is as follows. Catalyzes the NADPH-dependent formation of L-aspartate-semialdehyde (L-ASA) by the reductive dephosphorylation of L-aspartyl-4-phosphate. In Shewanella violacea (strain JCM 10179 / CIP 106290 / LMG 19151 / DSS12), this protein is Aspartate-semialdehyde dehydrogenase.